Reading from the N-terminus, the 2359-residue chain is Neuron navigator 3 (2359 aa).

One can recognise a Calponin-homology (CH) domain in the interval 77–184 (IEDSKIYTDW…LFFSLSRYKQ (108 aa)). 4 stretches are compositionally biased toward polar residues: residues 204-226 (THTA…SSLT), 233-243 (SKHSGIATSQK), 257-279 (ASSS…FNSI), and 300-317 (QPSS…TSGQ). 2 disordered regions span residues 204-623 (THTA…QQQH) and 641-660 (ENEG…TKMD). Low complexity predominate over residues 318 to 329 (PPASAIPSPSAS). Over residues 335–352 (KSMNVKHSATSTMLTVKQ) the composition is skewed to polar residues. Low complexity-rich tracts occupy residues 353-363 (PSPATSPTPSS) and 427-439 (NSGL…TNSS). Basic and acidic residues predominate over residues 465 to 491 (PKEKEEKTRDKNKACAEKSGKEEKDQV). Positions 522–536 (IPSSSGIPKPGSKVP) are enriched in low complexity. Residues 592–623 (ASPSSSCVMQVTHSSGQSPGNGAVQLPQQQQH) show a composition bias toward polar residues. Residues 680-708 (EARRMRTVKNIADLRQNLEETMSSLRGTQ) adopt a coiled-coil conformation. 4 disordered regions span residues 878 to 1315 (ADSW…SPLF), 1413 to 1472 (LSES…AMSS), 1653 to 1758 (GALN…KPSQ), and 1829 to 1855 (ETGN…SRQS). Low complexity-rich tracts occupy residues 883-896 (DSSS…DTLD) and 904-916 (NTTS…SNIT). Polar residues predominate over residues 917 to 926 (VPSRKNTQLK). The span at 943 to 960 (EELKKAEGDCDSHGDGAA) shows a compositional bias: basic and acidic residues. 2 stretches are compositionally biased toward polar residues: residues 978 to 989 (QKASLSVSQTGS) and 997 to 1013 (QGGT…TSAL). The span at 1017 to 1029 (GKTDDAKASEKGK) shows a compositional bias: basic and acidic residues. Low complexity-rich tracts occupy residues 1077–1095 (GAST…GSAT) and 1160–1173 (SSTS…SSKS). Residues 1190 to 1199 (GRSSPVTVNQ) are compositionally biased toward polar residues. Composition is skewed to low complexity over residues 1209–1229 (VSDS…TSAS), 1256–1266 (GAKAGGKSASA), and 1274–1285 (SSSVVLSPSTSL). Over residues 1299-1308 (GSMGSAGGLS) the composition is skewed to gly residues. Positions 1439–1448 (NQEEGKEWLR) are enriched in basic and acidic residues. Residues 1449-1461 (SHSTGGLQDTGNQ) are compositionally biased toward polar residues. Phosphoserine is present on residues S1462 and S1466. Residues 1462 to 1472 (SPLVSPSAMSS) are compositionally biased toward low complexity. The stretch at 1565–1656 (AEEKAHSEQI…AQAAIQGALN (92 aa)) forms a coiled coil. Composition is skewed to low complexity over residues 1675 to 1692 (SVSS…GSGN) and 1749 to 1758 (SGSSSMKPSQ). The stretch at 1768-1835 (EAEAEIILQL…LKAETGNTAK (68 aa)) forms a coiled coil. Low complexity predominate over residues 1841–1855 (SDSSSTASSSSSRQS).

The protein belongs to the Nav/unc-53 family. In terms of tissue distribution, present in neurons from central and peripheral nervous systems (at protein level). Highly expressed in brain cortex, midbrain, cerebellum and hippocampus.

It is found in the nucleus outer membrane. In terms of biological role, plays a role in cell migration. May be involved in neuron regeneration. May regulate IL2 production by T-cells. The sequence is that of Neuron navigator 3 (Nav3) from Mus musculus (Mouse).